Consider the following 626-residue polypeptide: Polypeptide N-acetylgalactosaminyltransferase 5 (626 aa).

At methionine 1–lysine 11 the chain is on the cytoplasmic side. The chain crosses the membrane as a helical; Signal-anchor for type II membrane protein span at residues valine 12–serine 31. Asparagine 32 is a glycosylation site (N-linked (GlcNAc...) asparagine). Residues asparagine 32–serine 626 are Lumenal-facing. Intrachain disulfides connect cysteine 165/cysteine 399, cysteine 390/cysteine 466, cysteine 502/cysteine 521, cysteine 544/cysteine 557, and cysteine 583/cysteine 598. Residues leucine 174–arginine 284 are catalytic subdomain A. Substrate-binding residues include aspartate 215 and arginine 245. A Mn(2+)-binding site is contributed by aspartate 268. Serine 269 provides a ligand contact to substrate. Mn(2+) is bound at residue histidine 270. N-linked (GlcNAc...) asparagine glycosylation occurs at asparagine 338. Residues proline 345–arginine 407 form a catalytic subdomain B region. Residue tryptophan 376 participates in substrate binding. Residue histidine 404 coordinates Mn(2+). The substrate site is built by arginine 407 and tyrosine 412. The Ricin B-type lectin domain occupies alanine 488–lysine 610.

This sequence belongs to the glycosyltransferase 2 family. GalNAc-T subfamily. It depends on Mn(2+) as a cofactor.

The protein resides in the golgi apparatus membrane. The enzyme catalyses L-seryl-[protein] + UDP-N-acetyl-alpha-D-galactosamine = a 3-O-[N-acetyl-alpha-D-galactosaminyl]-L-seryl-[protein] + UDP + H(+). It catalyses the reaction L-threonyl-[protein] + UDP-N-acetyl-alpha-D-galactosamine = a 3-O-[N-acetyl-alpha-D-galactosaminyl]-L-threonyl-[protein] + UDP + H(+). Its pathway is protein modification; protein glycosylation. Catalyzes the initial reaction in O-linked oligosaccharide biosynthesis, the transfer of an N-acetyl-D-galactosamine residue to a serine or threonine residue on the protein receptor. The sequence is that of Polypeptide N-acetylgalactosaminyltransferase 5 (gly-5) from Caenorhabditis elegans.